The following is a 261-amino-acid chain: NAD(P)H-quinone oxidoreductase subunit K, chloroplastic (261 aa).

The [4Fe-4S] cluster site is built by C43, C44, C108, and C139.

Belongs to the complex I 20 kDa subunit family. In terms of assembly, NDH is composed of at least 16 different subunits, 5 of which are encoded in the nucleus. [4Fe-4S] cluster is required as a cofactor.

It localises to the plastid. The protein resides in the chloroplast thylakoid membrane. It catalyses the reaction a plastoquinone + NADH + (n+1) H(+)(in) = a plastoquinol + NAD(+) + n H(+)(out). The enzyme catalyses a plastoquinone + NADPH + (n+1) H(+)(in) = a plastoquinol + NADP(+) + n H(+)(out). Functionally, NDH shuttles electrons from NAD(P)H:plastoquinone, via FMN and iron-sulfur (Fe-S) centers, to quinones in the photosynthetic chain and possibly in a chloroplast respiratory chain. The immediate electron acceptor for the enzyme in this species is believed to be plastoquinone. Couples the redox reaction to proton translocation, and thus conserves the redox energy in a proton gradient. The polypeptide is NAD(P)H-quinone oxidoreductase subunit K, chloroplastic (Cycas taitungensis (Prince sago)).